Reading from the N-terminus, the 798-residue chain is Transferrin receptor protein 2 (798 aa).

Over Met-1–Pro-81 the chain is Cytoplasmic. Positions Tyr-23–Val-26 match the Endocytosis signal motif. Residues Tyr-82–Phe-102 traverse the membrane as a helical; Signal-anchor for type II membrane protein segment. Over Arg-103–Phe-798 the chain is Extracellular. Asn-235, Asn-334, and Asn-535 each carry an N-linked (GlcNAc...) asparagine glycan.

Belongs to the peptidase M28 family. M28B subfamily. Predominantly expressed in liver. Also expressed in kidney, spleen, brain, lung, heart and muscle with very low expression in kidney, muscle and heart.

It localises to the cell membrane. The protein localises to the cytoplasm. Its function is as follows. Mediates cellular uptake of transferrin-bound iron in a non-iron dependent manner. May be involved in iron metabolism, hepatocyte function and erythrocyte differentiation. The protein is Transferrin receptor protein 2 (Tfr2) of Mus musculus (Mouse).